Reading from the N-terminus, the 277-residue chain is Undecaprenyl-diphosphatase (277 aa).

5 helical membrane-spanning segments follow: residues 83 to 103 (FALNIIIAFLPAALLGLVFAS), 109 to 129 (LFAPVPVAIAFIVGGFIILWI), 188 to 208 (ATEFSFFLAIPTLMGATVYSV), 218 to 238 (ADIPLFGLGGFAAFVSAFLCV), and 256 to 276 (YRIVFGLFVLLSAYYGWVVWA).

This sequence belongs to the UppP family.

It is found in the cell inner membrane. It carries out the reaction di-trans,octa-cis-undecaprenyl diphosphate + H2O = di-trans,octa-cis-undecaprenyl phosphate + phosphate + H(+). Functionally, catalyzes the dephosphorylation of undecaprenyl diphosphate (UPP). Confers resistance to bacitracin. The sequence is that of Undecaprenyl-diphosphatase from Janthinobacterium sp. (strain Marseille) (Minibacterium massiliensis).